A 373-amino-acid polypeptide reads, in one-letter code: MTDNSKIRVVVGMSGGVDSSVTALLLKEQGYDVIGVFMKNWDDTDEFGVCTATEDYKDVAAVADQIGIPYYSVNFEKEYWDRVFEYFLAEYRAGRTPNPDVMCNKEIKFKAFLDYAMTLGADYVATGHYAQVKRDENGKVHMLRGADNGKDQTYFLSQLSQEQLQKTLFPLGHLQKSEVREIAERAGLATAKKKDSTGICFIGEKNFKQFLSQYLPAQKGRMMTIDGRDMGEHAGLMYYTIGQRGGLGIGGQHGGDNQPWFVVGKDLSQNILYVGQGFYHEALMSNSLDASVIHFTREMPEEFTFECTAKFRYRQPDSHVTVHVRGDKAEVVFAEPQRAITPGQAVVFYDGKECLGGGMIDMAYKNGQPCQYI.

Residues 12 to 19 (GMSGGVDS) and Met-38 each bind ATP. The interaction with target base in tRNA stretch occupies residues 98–100 (NPD). Cys-103 functions as the Nucleophile in the catalytic mechanism. A disulfide bridge connects residues Cys-103 and Cys-200. Gly-127 is an ATP binding site. Residues 150–152 (KDQ) form an interaction with tRNA region. Cys-200 serves as the catalytic Cysteine persulfide intermediate. The interaction with tRNA stretch occupies residues 312-313 (RY).

This sequence belongs to the MnmA/TRMU family.

It localises to the cytoplasm. The enzyme catalyses S-sulfanyl-L-cysteinyl-[protein] + uridine(34) in tRNA + AH2 + ATP = 2-thiouridine(34) in tRNA + L-cysteinyl-[protein] + A + AMP + diphosphate + H(+). Its function is as follows. Catalyzes the 2-thiolation of uridine at the wobble position (U34) of tRNA, leading to the formation of s(2)U34. The chain is tRNA-specific 2-thiouridylase MnmA from Streptococcus pyogenes serotype M49 (strain NZ131).